A 926-amino-acid chain; its full sequence is Neurofilament medium polypeptide (926 aa).

The span at 1–10 (MSYTLDSLGN) shows a compositional bias: polar residues. Disordered stretches follow at residues 1 to 51 (MSYT…VSSS) and 79 to 102 (QSSSLLDGGSGPGGDYKLSRSNEK). An N-acetylserine modification is found at S2. The tract at residues 2-104 (SYTLDSLGNP…KLSRSNEKEQ (103 aa)) is head. Over residues 21–44 (RSSFSRISGSPSSGFRSQSWSRGS) the composition is skewed to low complexity. S30 bears the Phosphoserine mark. Omega-N-methylarginine is present on R42. An O-linked (GlcNAc) threonine glycan is attached at T47. S99 is subject to Phosphoserine. Positions 101-412 (EKEQIQGLND…KLLEGEETRF (312 aa)) constitute an IF rod domain. The segment at 105-136 (IQGLNDRFAGYIEKVHYLEQQNKEIEAEIQAL) is coil 1A. A linker 1 region spans residues 137-149 (RQKQASHAQLGDA). Residues 150-248 (YDQEIRELRA…EEEVADLLAQ (99 aa)) form a coil 1B region. A Phosphoserine modification is found at S226. The interval 249 to 265 (IQASHITVERKDYLKTD) is linker 12. Residues 266–287 (ISTALKEIRSQLESHSDQNMHQ) are coil 2A. The linker 2 stretch occupies residues 288-291 (AEEW). A coil 2B region spans residues 292–412 (FKCRYAKLTE…KLLEGEETRF (121 aa)). A Phosphotyrosine modification is found at Y320. Residues S346, S418, S430, S468, and S484 each carry the phosphoserine modification. A tail region spans residues 413–926 (STFAGSITGP…AIVKEVTQSD (514 aa)). The segment at 487-860 (EEVKEEEAEE…EKKGGDKSEE (374 aa)) is disordered. A compositionally biased stretch (acidic residues) spans 490–507 (KEEEAEEKEEKEEAEEEV). Copy 1 of the repeat occupies 512-516 (KSPVK). The interval 512–698 (KSPVKATAPE…KSPAPKSPVE (187 aa)) is 17 X 5 AA approximate tandem repeats of K-S-P-[TVEA]-[AKETP]. S513 is subject to Phosphoserine. Residues 523-543 (KEEEGEKEEEEGQEEEEEEEE) show a composition bias toward acidic residues. A compositionally biased stretch (basic and acidic residues) spans 544-563 (AAKSDQAEEGGSEKEGSSEK). A phosphoserine mark is found at S547, S555, S560, and S561. Residues 564–584 (EEGEQEEEGETEAEGEGEEAA) are compositionally biased toward acidic residues. Position 574 is a phosphothreonine (T574). The span at 585-619 (AEAKEEKKMEEKAEEVAPKEELAAEAKVEKPEKAK) shows a compositional bias: basic and acidic residues. 16 repeat units span residues 619 to 623 (KSPVA), 624 to 628 (KSPTT), 629 to 633 (KSPTA), 634 to 638 (KSPEA), 639 to 643 (KSPEA), 644 to 648 (KSPTA), 649 to 653 (KSPTA), 654 to 658 (KSPVA), 659 to 663 (KSPTA), 664 to 668 (KSPEA), 669 to 673 (KSPEA), 674 to 678 (KSPTA), 679 to 683 (KSPTA), 684 to 688 (KSPAA), 689 to 693 (KSPAP), and 694 to 698 (KSPVE). T628 is modified (phosphothreonine). Phosphoserine occurs at positions 630, 635, and 640. The residue at position 647 (T647) is a Phosphothreonine. Phosphoserine is present on residues S650 and S655. S665 and S670 each carry phosphoserine. The span at 673 to 692 (AKSPTAKSPTAKSPAAKSPA) shows a compositional bias: low complexity. Phosphothreonine is present on T677. Phosphoserine occurs at positions 680, 685, 690, 695, 727, 751, 757, 771, 831, and 847. Basic and acidic residues-rich tracts occupy residues 696–764 (PVEE…EEVP), 771–811 (SPEK…KEDI), and 826–838 (TKEKGSGGEEEKG). A compositionally biased stretch (basic and acidic residues) spans 849–860 (GDEKKGGDKSEE).

Forms heterodimers with NEFL; which can further hetero-oligomerize (in vitro). Forms heterodimers with INA (in vitro). Phosphorylated on a number of serine residues in the repeated K-S-P tripeptide motif. Phosphorylation of NFH may result in the formation of interfilament cross-links that are important in the maintenance of axonal caliber. In terms of processing, phosphorylation seems to play a major role in the functioning of the larger neurofilament polypeptides (NF-M and NF-H), the levels of phosphorylation being altered developmentally and coincidentally with a change in the neurofilament function. Post-translationally, phosphorylated in the head and rod regions by the PKC kinase PKN1, leading to the inhibition of polymerization.

It is found in the cytoplasm. The protein resides in the cytoskeleton. The protein localises to the cell projection. Its subcellular location is the axon. Neurofilaments usually contain three intermediate filament proteins: NEFL, NEFM, and NEFH which are involved in the maintenance of neuronal caliber. May additionally cooperate with the neuronal intermediate filament proteins PRPH and INA to form neuronal filamentous networks. The sequence is that of Neurofilament medium polypeptide (NEFM) from Bos taurus (Bovine).